The chain runs to 194 residues: Ubiquitin-conjugating enzyme E2 T (194 aa).

In terms of domain architecture, UBC core spans 2-152 (QRVSRLKREM…AKKWTAEHAI (151 aa)). The active-site Glycyl thioester intermediate is cysteine 86. Basic and acidic residues-rich tracts occupy residues 158 to 170 (CVETDGKTPENKN) and 185 to 194 (NLEHTKKVCL). The disordered stretch occupies residues 158-194 (CVETDGKTPENKNLKTSHKREALSAQENLEHTKKVCL).

It belongs to the ubiquitin-conjugating enzyme family.

It is found in the nucleus. It carries out the reaction S-ubiquitinyl-[E1 ubiquitin-activating enzyme]-L-cysteine + [E2 ubiquitin-conjugating enzyme]-L-cysteine = [E1 ubiquitin-activating enzyme]-L-cysteine + S-ubiquitinyl-[E2 ubiquitin-conjugating enzyme]-L-cysteine.. Its pathway is protein modification; protein ubiquitination. Functionally, accepts ubiquitin from the E1 complex and catalyzes its covalent attachment to other proteins. Catalyzes monoubiquitination. Involved in DNA repair. The sequence is that of Ubiquitin-conjugating enzyme E2 T (ube2t) from Danio rerio (Zebrafish).